Reading from the N-terminus, the 190-residue chain is LOB domain-containing protein 1 (190 aa).

A compositionally biased stretch (polar residues) spans methionine 1–threonine 11. The tract at residues methionine 1 to proline 27 is disordered. The LOB domain occupies serine 32–methionine 133.

This sequence belongs to the LOB domain-containing protein family. As to expression, expressed in young shoots, roots, stems, leaves and flowers.

This Arabidopsis thaliana (Mouse-ear cress) protein is LOB domain-containing protein 1 (LBD1).